The chain runs to 183 residues: Large ribosomal subunit protein uL6 (183 aa).

Belongs to the universal ribosomal protein uL6 family. In terms of assembly, part of the 50S ribosomal subunit.

Its function is as follows. This protein binds to the 23S rRNA, and is important in its secondary structure. It is located near the subunit interface in the base of the L7/L12 stalk, and near the tRNA binding site of the peptidyltransferase center. This Mycoplasmoides gallisepticum (strain R(low / passage 15 / clone 2)) (Mycoplasma gallisepticum) protein is Large ribosomal subunit protein uL6.